We begin with the raw amino-acid sequence, 485 residues long: Solute carrier family 35 member F4 (485 aa).

Composition is skewed to polar residues over residues 32 to 42 and 50 to 64; these read SQKSTTRSSVT and CPSSHSSISRQLSPL. Disordered stretches follow at residues 32–64 and 78–111; these read SQKSTTRSSVTRCKPGPNCPSSHSSISRQLSPL and QSRGSSGVCGRRVERQSRSGDDGTQTRPESSSQE. Basic and acidic residues predominate over residues 88–98; sequence RRVERQSRSGD. The segment covering 99–111 has biased composition (polar residues); it reads DGTQTRPESSSQE. 10 helical membrane passes run 129 to 149, 156 to 176, 217 to 234, 241 to 261, 265 to 285, 294 to 314, 329 to 349, 359 to 381, 383 to 405, and 414 to 434; these read IWGLLIILSVSSSWVGTTQIV, FYCPFFMTWFSTNWNIMFFPV, APFSILWTLTNYLYLLAL, DVSALFCCNKAFVFLLSWIVL, FMGVRIVAAIMAITGIVMMAY, IIGVAFAVGSASTSALYKVLF, FVSTLGFFNLIFISFTPIILY, FAALPWGCLCGMAGLWLAFNILV, VGVVLTYPILISIGTVLSVPGNA, and VIFNVVRLAATIIICIGFLLM. One can recognise an EamA domain in the interval 225 to 285; that stretch reads LTNYLYLLAL…AITGIVMMAY (61 aa).

Belongs to the SLC35F solute transporter family.

The protein localises to the membrane. Functionally, putative solute transporter. In Mus musculus (Mouse), this protein is Solute carrier family 35 member F4 (Slc35f4).